Reading from the N-terminus, the 30-residue chain is Kappa-sparatoxin-Hv1b (30 aa).

Intrachain disulfides connect cysteine 3–cysteine 17, cysteine 10–cysteine 22, and cysteine 16–cysteine 26. Residue tryptophan 30 is modified to Tryptophan amide.

The protein belongs to the neurotoxin 10 (Hwtx-1) family. 19 (HpTX2) subfamily. In terms of tissue distribution, expressed by the venom gland.

It localises to the secreted. In terms of biological role, inhibitor of voltage-gated potassium channels of the Kv4/KCND family. Inhibition of Kv4.3/KCND3 and Kv4.2/KCND2 is strongly voltage-dependent, while inhibition of Kv4.1/KCND1 shows less voltage-dependence. Its binding site may be near the potassium channel voltage sensor. Also blocks calcium channels. In Heteropoda venatoria (Brown huntsman spider), this protein is Kappa-sparatoxin-Hv1b.